The primary structure comprises 346 residues: Glucose-6-phosphatase 3 (346 aa).

The Lumenal segment spans residues 1 to 24 (MESTLGAGIAMAEALQNQLPWLEN). The chain crosses the membrane as a helical span at residues 25 to 45 (VWLWVTFLGDPKSLFLFYFPA). Topologically, residues 46-54 (AYYASRRVG) are cytoplasmic. Residues 55 to 75 (IAVLWISLITEWLNLVFKWFL) traverse the membrane as a helical segment. Residues 76–108 (FGDRPFWWVHESGYYSQAPAQVHQFPSSCETGP) lie on the Lumenal side of the membrane. A substrate-binding site is contributed by Arg-79. Residues 109 to 129 (GSPSGHCMITGAALWPIMTAV) traverse the membrane as a helical segment. His-114 serves as the catalytic Proton donor. Over 130 to 140 (SSQMATRAHSR) the chain is Cytoplasmic. The helical transmembrane segment at 141 to 162 (WVRVIPSLAYCTFLLAVGLSRV) threads the bilayer. A substrate-binding site is contributed by Arg-161. Over 163-167 (FLLAH) the chain is Lumenal. His-167 serves as the catalytic Nucleophile. Residues 168–186 (FPHQVLAGLITGAVLGWLM) traverse the membrane as a helical segment. Residues 187–197 (TPQVPMERELS) lie on the Cytoplasmic side of the membrane. The chain crosses the membrane as a helical span at residues 198–218 (FYGLTSLALLLGASLIYWTLF). Topologically, residues 219–254 (TLGLDLSWSINLASKWCERPEWVHLDSRPFASLSRD) are lumenal. The chain crosses the membrane as a helical span at residues 255–273 (SGAALGLGIALHSPCYAQV). Residues 274 to 283 (RRAHLGYGQK) are Cytoplasmic-facing. A helical transmembrane segment spans residues 284–304 (LVCLVLAMGLLGPLNWLGYPP). Residues 305-307 (QIS) lie on the Lumenal side of the membrane. Residues 308–328 (LFYIFNFLKYTLWPCLVLALV) traverse the membrane as a helical segment. Topologically, residues 329–346 (PWLVHMFSAQEAPPIRSS) are cytoplasmic.

It belongs to the glucose-6-phosphatase family.

It is found in the endoplasmic reticulum membrane. It catalyses the reaction D-glucose 6-phosphate + H2O = D-glucose + phosphate. The protein operates within carbohydrate biosynthesis; gluconeogenesis. With respect to regulation, inhibited by vanadate. Functionally, hydrolyzes glucose-6-phosphate to glucose in the endoplasmic reticulum. May form with the glucose-6-phosphate transporter (SLC37A4/G6PT) a ubiquitously expressed complex responsible for glucose production through glycogenolysis and gluconeogenesis. Probably required for normal neutrophil function. This Bos taurus (Bovine) protein is Glucose-6-phosphatase 3 (G6PC3).